An 80-amino-acid polypeptide reads, in one-letter code: Cell division protein ZapB (80 aa).

A coiled-coil region spans residues 3–80; it reads FEVLEQLESK…ALLGKMDEVE (78 aa). Over residues 41-53 the composition is skewed to basic and acidic residues; sequence ANELRSQREELEQ. The disordered stretch occupies residues 41–60; sequence ANELRSQREELEQKSQQAQQ.

Belongs to the ZapB family. As to quaternary structure, homodimer. The ends of the coiled-coil dimer bind to each other, forming polymers. Interacts with FtsZ.

The protein resides in the cytoplasm. Its function is as follows. Non-essential, abundant cell division factor that is required for proper Z-ring formation. It is recruited early to the divisome by direct interaction with FtsZ, stimulating Z-ring assembly and thereby promoting cell division earlier in the cell cycle. Its recruitment to the Z-ring requires functional FtsA or ZipA. The protein is Cell division protein ZapB of Vibrio campbellii (strain ATCC BAA-1116).